We begin with the raw amino-acid sequence, 381 residues long: Cytosolic acyl coenzyme A thioester hydrolase (381 aa).

In terms of domain architecture, HotDog ACOT-type 1 spans 51–169; it reads LGHCVTMGRI…TLWYVPLSLK (119 aa). N67 is a catalytic residue. K169 and K199 each carry N6-acetyllysine. The 115-residue stretch at 225–339 folds into the HotDog ACOT-type 2 domain; it reads SYSQSSLIHL…FFTYVSLNQE (115 aa). Residue D256 is part of the active site. K284 carries the post-translational modification N6-acetyllysine. Positions 342-381 are disordered; sequence PMPVPQLVPETEDEKKRFEEGKGRYLQMKAKRQGHTEPQP. A compositionally biased stretch (basic and acidic residues) spans 354–364; that stretch reads DEKKRFEEGKG.

Homohexamer. As to expression, widely expressed with highest levels in brain. High levels also found in thymus, large intestine and testis. Negligible in muscle and adipose tissue. In the central and peripheral nervous systems, displays a predominantly neuronal localization with highest expression in cell bodies and neurites.

The protein resides in the cytoplasm. Its subcellular location is the cytosol. The catalysed reaction is hexadecanoyl-CoA + H2O = hexadecanoate + CoA + H(+). The enzyme catalyses dodecanoyl-CoA + H2O = dodecanoate + CoA + H(+). It carries out the reaction tetradecanoyl-CoA + H2O = tetradecanoate + CoA + H(+). It catalyses the reaction decanoyl-CoA + H2O = decanoate + CoA + H(+). The catalysed reaction is octanoyl-CoA + H2O = octanoate + CoA + H(+). The enzyme catalyses octadecanoyl-CoA + H2O = octadecanoate + CoA + H(+). It carries out the reaction (9Z)-octadecenoyl-CoA + H2O = (9Z)-octadecenoate + CoA + H(+). It functions in the pathway lipid metabolism; fatty acid metabolism. In terms of biological role, catalyzes the hydrolysis of acyl-CoAs into free fatty acids and coenzyme A (CoASH), regulating their respective intracellular levels. Preferentially hydrolyzes palmitoyl-CoA, but has a broad specificity acting on other fatty acyl-CoAs with chain-lengths of C8-C18. May play an important physiological function in brain. The sequence is that of Cytosolic acyl coenzyme A thioester hydrolase (Acot7) from Mus musculus (Mouse).